The following is a 508-amino-acid chain: Monocarboxylate transporter 9 (508 aa).

Residues 1–12 lie on the Cytoplasmic side of the membrane; that stretch reads MEFQKSPDGGWG. Transmembrane regions (helical) follow at residues 13–33, 53–73, 80–100, 102–122, 137–157, 164–184, 303–323, 341–361, 370–390, 396–416, 431–451, and 460–480; these read WVIVVVSFFTQFLSYGSPLAV, WVGSLASGVGLLASPVCSLFV, PVTIFSGFLVAGGLMLSSLAP, IYFLFFSYGIVVGLGCGLLYT, GLALGLISTGSSVGLFIYAAL, FYGLDGCLLIVGALALNILAC, VFSALFIAILLFDIGGFPPSL, MPLISIFGIMTAVGKLLLGIL, LYLYVATLIITGLALCAIPFA, LAILSGILGFLTGNWSIFPYV, GILMFFAGLGNSLGPPIVGWF, and IAFYFSGFCVLLGGFILLLAI. Residues 481–508 lie on the Cytoplasmic side of the membrane; the sequence is LPCWDMCNKKLPKPAVPTTFFYKVASNV.

The protein belongs to the major facilitator superfamily. Monocarboxylate porter (TC 2.A.1.13) family.

The protein resides in the cell membrane. It catalyses the reaction creatine(in) = creatine(out). The catalysed reaction is (R)-carnitine(in) = (R)-carnitine(out). Its function is as follows. Extracellular pH-and Na(+)-sensitive low-affinity creatine transporter. Also functions as a pH-independent carnitine efflux transporter. This chain is Monocarboxylate transporter 9 (Slc16a9), found in Mus musculus (Mouse).